The following is a 149-amino-acid chain: Sec-independent protein translocase protein TatB (149 aa).

The chain crosses the membrane as a helical span at residues 1–22; that stretch reads MFDGIGFMELLLIGVLGLIVLG. Residues 86–113 are compositionally biased toward polar residues; the sequence is LKQAAQSVNRPYQVQDTPSAQDNQIHNP. Positions 86-149 are disordered; it reads LKQAAQSVNR…DPRSNTKANG (64 aa). Residues 114–135 show a composition bias toward low complexity; the sequence is ASQTVSTEASSTSASSAPKSES.

The protein belongs to the TatB family. In terms of assembly, the Tat system comprises two distinct complexes: a TatABC complex, containing multiple copies of TatA, TatB and TatC subunits, and a separate TatA complex, containing only TatA subunits. Substrates initially bind to the TatABC complex, which probably triggers association of the separate TatA complex to form the active translocon.

It is found in the cell inner membrane. Its function is as follows. Part of the twin-arginine translocation (Tat) system that transports large folded proteins containing a characteristic twin-arginine motif in their signal peptide across membranes. Together with TatC, TatB is part of a receptor directly interacting with Tat signal peptides. TatB may form an oligomeric binding site that transiently accommodates folded Tat precursor proteins before their translocation. This chain is Sec-independent protein translocase protein TatB, found in Shewanella oneidensis (strain ATCC 700550 / JCM 31522 / CIP 106686 / LMG 19005 / NCIMB 14063 / MR-1).